The chain runs to 865 residues: Protein translocase subunit SecA (865 aa).

ATP is bound by residues Gln93, 111 to 115 (GEGKT), and Asp501. Positions 841, 843, 852, and 853 each coordinate Zn(2+).

This sequence belongs to the SecA family. Monomer and homodimer. Part of the essential Sec protein translocation apparatus which comprises SecA, SecYEG and auxiliary proteins SecDF-YajC and YidC. Zn(2+) serves as cofactor.

The protein localises to the cell inner membrane. The protein resides in the cytoplasm. The enzyme catalyses ATP + H2O + cellular proteinSide 1 = ADP + phosphate + cellular proteinSide 2.. Functionally, part of the Sec protein translocase complex. Interacts with the SecYEG preprotein conducting channel. Has a central role in coupling the hydrolysis of ATP to the transfer of proteins into and across the cell membrane, serving as an ATP-driven molecular motor driving the stepwise translocation of polypeptide chains across the membrane. The polypeptide is Protein translocase subunit SecA (Helicobacter pylori (strain ATCC 700392 / 26695) (Campylobacter pylori)).